Reading from the N-terminus, the 499-residue chain is Lysine--tRNA ligase (499 aa).

The Mg(2+) site is built by E408 and E415.

Belongs to the class-II aminoacyl-tRNA synthetase family. In terms of assembly, homodimer. Mg(2+) serves as cofactor.

Its subcellular location is the cytoplasm. It catalyses the reaction tRNA(Lys) + L-lysine + ATP = L-lysyl-tRNA(Lys) + AMP + diphosphate. This chain is Lysine--tRNA ligase, found in Thermoanaerobacter sp. (strain X514).